Consider the following 425-residue polypeptide: Aromatic prenyl transferase ptmE (425 aa).

Residues 83–84 (GI) and glutamate 92 contribute to the L-tryptophan site. Residues arginine 107, lysine 198, tyrosine 200, arginine 265, lysine 267, tyrosine 269, tyrosine 345, tyrosine 410, and tyrosine 414 each contribute to the substrate site.

This sequence belongs to the tryptophan dimethylallyltransferase family. Homodimer.

The protein operates within secondary metabolite biosynthesis. In terms of biological role, aromatic prenyl transferase; part of the gene cluster that mediates the biosynthesis of the indole diterpenes penitrems. The geranylgeranyl diphosphate (GGPP) synthase ptmG catalyzes the first step in penitrem biosynthesis via conversion of farnesyl pyrophosphate and isopentyl pyrophosphate into geranylgeranyl pyrophosphate (GGPP). Condensation of indole-3-glycerol phosphate with GGPP by the prenyl transferase ptmC then forms 3-geranylgeranylindole (3-GGI). Epoxidation by the FAD-dependent monooxygenase ptmM leads to a epoxidized-GGI that is substrate of the terpene cyclase ptmB for cyclization to yield paspaline. Paspaline is subsequently converted to 13-desoxypaxilline by the cytochrome P450 monooxygenase ptmP, the latter being then converted to paxilline by the cytochrome P450 monooxygenase ptmQ. Paxilline is converted to beta-paxitriol via C-10 ketoreduction by the short-chain dehydrogenase ptmH which can be monoprenylated at the C-20 by the indole diterpene prenyltransferase ptmD. A two-step elimination (acetylation and elimination) process performed by the O-acetyltransferase ptmV and ptmI leads to the production of the prenylated form of penijanthine. The FAD-linked oxidoreductase ptmO then converts the prenylated form of penijanthine into PC-M5 which is in turn transformed into PC-M4 by the aromatic dimethylallyltransferase ptmE. Five sequential oxidative transformations performed by the cytochrome P450 monooxygenases ptmK, ptmU, ptmL, ptmN and ptmJ yield the various penitrem compounds. PtmK, ptmU and ptmM are involved in the formation of the key bicyclic ring of penitrem C via the formation of the intermediates secopenitrem D and penitrem D. PtmL catalyzes the epoxidation of penitrem D and C to yield penitrem B and F, respectively. PtmJ catalyzes the last benzylic hydroxylation to convert penitrem B to prenitrem E and penitrem F to penitrem A. The polypeptide is Aromatic prenyl transferase ptmE (Penicillium ochrochloron).